The chain runs to 296 residues: Acetaldehyde dehydrogenase (296 aa).

An NAD(+)-binding site is contributed by 15–18; the sequence is SGNI. Catalysis depends on Cys-132, which acts as the Acyl-thioester intermediate. NAD(+) is bound by residues 164-172 and Asn-274; that span reads SAGPATRAN.

This sequence belongs to the acetaldehyde dehydrogenase family. Interacts with MhpE.

It carries out the reaction acetaldehyde + NAD(+) + CoA = acetyl-CoA + NADH + H(+). Its pathway is aromatic compound metabolism; 3-phenylpropanoate degradation. Its function is as follows. Catalyzes the conversion of acetaldehyde to acetyl-CoA, using NAD(+) and coenzyme A. Is the final enzyme in the meta-cleavage pathway for the degradation of aromatic compounds. The polypeptide is Acetaldehyde dehydrogenase (Pectobacterium atrosepticum (strain SCRI 1043 / ATCC BAA-672) (Erwinia carotovora subsp. atroseptica)).